Reading from the N-terminus, the 91-residue chain is Small ribosomal subunit protein bS18 (91 aa).

This sequence belongs to the bacterial ribosomal protein bS18 family. Part of the 30S ribosomal subunit. Forms a tight heterodimer with protein bS6.

Its function is as follows. Binds as a heterodimer with protein bS6 to the central domain of the 16S rRNA, where it helps stabilize the platform of the 30S subunit. This Wolbachia pipientis wMel protein is Small ribosomal subunit protein bS18.